The sequence spans 258 residues: 5'-nucleotidase SurE (258 aa).

A divalent metal cation is bound by residues Asp8, Asp9, Ser40, and Asn98.

This sequence belongs to the SurE nucleotidase family. The cofactor is a divalent metal cation.

It localises to the cytoplasm. The catalysed reaction is a ribonucleoside 5'-phosphate + H2O = a ribonucleoside + phosphate. Functionally, nucleotidase that shows phosphatase activity on nucleoside 5'-monophosphates. The chain is 5'-nucleotidase SurE from Synechococcus elongatus (strain ATCC 33912 / PCC 7942 / FACHB-805) (Anacystis nidulans R2).